A 438-amino-acid polypeptide reads, in one-letter code: Actin-like protein ARP6 (438 aa).

Positions Asp158–Gly181 are disordered. The span at Asn163 to Ser174 shows a compositional bias: low complexity.

This sequence belongs to the actin family. ARP6 subfamily. In terms of assembly, component of the SWR1 chromatin remodeling complex composed of at least ACT1, ARP4, RVB1, RVB2, ARP6, YAF9, VPS71, VPS72, SWC3, SWC4, SWC5, SWC7 and SWR1, and perhaps BDF1.

The protein resides in the cytoplasm. Its subcellular location is the nucleus. In terms of biological role, component of the SWR1 complex which mediates the ATP-dependent exchange of histone H2A for the H2A variant HZT1 leading to transcriptional regulation of selected genes by chromatin remodeling. Involved in chromosome stability. In Saccharomyces cerevisiae (strain ATCC 204508 / S288c) (Baker's yeast), this protein is Actin-like protein ARP6 (ARP6).